The chain runs to 235 residues: Phosphoribosylaminoimidazole-succinocarboxamide synthase (235 aa).

The protein belongs to the SAICAR synthetase family.

It catalyses the reaction 5-amino-1-(5-phospho-D-ribosyl)imidazole-4-carboxylate + L-aspartate + ATP = (2S)-2-[5-amino-1-(5-phospho-beta-D-ribosyl)imidazole-4-carboxamido]succinate + ADP + phosphate + 2 H(+). It functions in the pathway purine metabolism; IMP biosynthesis via de novo pathway; 5-amino-1-(5-phospho-D-ribosyl)imidazole-4-carboxamide from 5-amino-1-(5-phospho-D-ribosyl)imidazole-4-carboxylate: step 1/2. This Clostridium botulinum (strain Eklund 17B / Type B) protein is Phosphoribosylaminoimidazole-succinocarboxamide synthase.